The following is a 506-amino-acid chain: RNA-splicing ligase RtcB homolog (506 aa).

The Mn(2+) site is built by Asp120, Cys123, His228, His260, and His354. Residue Asn227–Glu231 participates in GMP binding. GMP is bound by residues His354–Asn355, Gly403–Met406, Ser410, His429–Gly432, and Lys505. Residue His429 is the GMP-histidine intermediate of the active site.

The protein belongs to the RtcB family. As to quaternary structure, catalytic component of the tRNA-splicing ligase complex. It depends on Mn(2+) as a cofactor.

The catalysed reaction is a 3'-end 3'-phospho-ribonucleotide-RNA + a 5'-end dephospho-ribonucleoside-RNA + GTP = a ribonucleotidyl-ribonucleotide-RNA + GMP + diphosphate. It catalyses the reaction a 3'-end 2',3'-cyclophospho-ribonucleotide-RNA + a 5'-end dephospho-ribonucleoside-RNA + GTP + H2O = a ribonucleotidyl-ribonucleotide-RNA + GMP + diphosphate + H(+). In terms of biological role, catalytic subunit of the tRNA-splicing ligase complex that acts by directly joining spliced tRNA halves to mature-sized tRNAs by incorporating the precursor-derived splice junction phosphate into the mature tRNA as a canonical 3',5'-phosphodiester. May act as an RNA ligase with broad substrate specificity, and may function toward other RNAs. The protein is RNA-splicing ligase RtcB homolog of Aedes aegypti (Yellowfever mosquito).